Here is a 572-residue protein sequence, read N- to C-terminus: MLDMRSMVTVHPALIAKPKGKTVSGDGADPKKRGRPKKNATEPAVRNPVTRAGVTRYMNPLVESLVRDNPFRGDNLVKESLLGQTLAEQTLVRANSRDNLLKESLVEQSFVDQTLQDQSLVDQSILRESLLRDNPRDTLRKESLRKYNSRANPLAESLLEESTTPKPRRGAHRKPLVLTKEMEEKLEALDRDMRTAEETKVSIAGSAGIPVTALPGMEALGVMQMVSSLGFLDAGDKPNVIKTMVVKYLDVFLSMGCSAPKPCLVNVPRGYRRFKQSSSVSPAYAAKLSSEDTEAWSGAAGVAVEAKMRHTAAVLESRNLSLEPYGSNPIKLERSALAAYMELMSMAEEAEGEDLEGIISDCRVLRTSTEWCRDLSQTVSSWWPPLREAISRRGTALSDYVSDREVDVIRGRSRVPALSCVLLYGKRVDDNDAPLTAPQTVLKPFDVTDYSRRLGGVWLHHARFPEYAPKRLFDPRPGAEPVLIRTCAGYLMTEERGPLRCWRKDAHMYQISLEIYNRLTTELNAVPPQTRCGRYNAKWLSTNGPTGVQKIVLAAARALTEPRLSWNDVFEV.

Positions 13 to 45 (ALIAKPKGKTVSGDGADPKKRGRPKKNATEPAV) are disordered. Residues 177–204 (VLTKEMEEKLEALDRDMRTAEETKVSIA) are a coiled coil.

This is an uncharacterized protein from Dryophytes versicolor (chameleon treefrog).